A 292-amino-acid polypeptide reads, in one-letter code: Potassium channel, subfamily K, member 16 (292 aa).

Residues 1–13 (MPRAGVCGCWGGQ) lie on the Cytoplasmic side of the membrane. The helical transmembrane segment at 14–34 (VLPLLLAYICYLLLGATIFQL) threads the bilayer. The segment at residues 98–116 (SFFFAGTVVTTIGYGNLAP) is an intramembrane region (pore-forming). Residues Thr-108, Ile-109, Gly-110, and Tyr-111 each coordinate K(+). Positions 108–113 (TIGYGN) are selectivity filter 1. Residues 120–140 (AGQVFCVFYALMGIPLNVVFL) traverse the membrane as a helical segment. Topologically, residues 141–165 (NHLGTGLRAHLTTLDRWEDHPRHSQ) are cytoplasmic. Residues 166-186 (LLQVLGLALFLTLGTLVILIF) traverse the membrane as a helical segment. Positions 202 to 221 (GFYFAFITLSTIGFGDYVVG) form an intramembrane region, pore-forming. 4 residues coordinate K(+): Thr-212, Ile-213, Gly-214, and Phe-215. Positions 212–217 (TIGFGD) are selectivity filter 2. Residues 238-258 (IWILLGLAWLAVVLSLGSLLL) traverse the membrane as a helical segment. The Cytoplasmic portion of the chain corresponds to 259 to 292 (HRCSRLWQLIRGLDLKDGAAPDSEPRSQKIPISA).

Belongs to the two pore domain potassium channel (TC 1.A.1.8) family. As to quaternary structure, homodimer; disulfide-linked. Heterodimer with KCNK17 and KCNK5. As to expression, expressed in pacreatic beta-cells (at protein level). Expressed in pacreatic delta-cells (at protein level).

It is found in the cell membrane. Its subcellular location is the endoplasmic reticulum membrane. The protein localises to the mitochondrion inner membrane. It catalyses the reaction K(+)(in) = K(+)(out). The enzyme catalyses Rb(+)(in) = Rb(+)(out). It carries out the reaction Cs(+)(in) = Cs(+)(out). In terms of biological role, k(+) channel that conducts voltage-dependent outward rectifying currents upon membrane depolarization. Voltage sensing is coupled to K(+) electrochemical gradient in an 'ion flux gating' mode where outward but not inward ion flow opens the gate. Homo- and heterodimerizes to form functional channels with distinct regulatory and gating properties. In pancreatic islets, conducts K(+) countercurrents for Ca(2+) release from the endoplasmic reticulum (ER) and regulates the frequency and duration of cytosolic Ca(2+) oscillations coupled to secretion of pancreatic hormones. In pancreatic beta cells, drives ER Ca(2+) efflux, which in turn activates Ca(2+)-dependent plasma membrane K(+) slow currents and cytosolic Ca(2+) influx, overall contributing to synchronous cytosolic Ca(2+) oscillations. Limits glucose-induced cytosolic Ca(2+) oscillations coupled to second-phase INS secretion. Contributes to beta cell adaptation to acute inflammation by maintaining normal cytosolic Ca(2+) levels and INS secretion. May regulate beta cell mitochondrial Ca(2+) levels either indirectly via ER Ca(2+) efflux or directly by hyperpolarizing the mitochondrial membrane potential. Limits mitochondrial Ca(2+) oscillations and ATP production involved in glucose homeostasis upon metabolic stress. In pancreatic delta cells, limits Ca(2+)-induced Ca(2+)-release involved in somatostatin secretion and modulates islet paracrine signaling involved in glucagon secretion. Permeable to other monovalent cations such as Rb(+) and Cs(+). The protein is Potassium channel, subfamily K, member 16 of Mus musculus (Mouse).